The chain runs to 169 residues: uncharacterized protein (169 aa).

The chain crosses the membrane as a helical span at residues 10 to 30 (YFVTILIIIIIILIVLLIVFL). The disordered stretch occupies residues 98-123 (QSKPINKNNQQTKNTPTPLDDRPDLS). Over residues 100-115 (KPINKNNQQTKNTPTP) the composition is skewed to low complexity.

It localises to the membrane. This is an uncharacterized protein from Acanthamoeba polyphaga (Amoeba).